The following is a 298-amino-acid chain: Protease HtpX homolog (298 aa).

2 consecutive transmembrane segments (helical) span residues 15 to 35 (LIMV…GYLF) and 38 to 58 (SPWT…LIMW). Residue H143 participates in Zn(2+) binding. E144 is an active-site residue. Zn(2+) is bound at residue H147. The next 2 membrane-spanning stretches (helical) occupy residues 153–173 (ILLS…SGIA) and 197–217 (IIFK…SASL). Zn(2+) is bound at residue E227.

The protein belongs to the peptidase M48B family. Requires Zn(2+) as cofactor.

The protein resides in the cell membrane. The protein is Protease HtpX homolog of Lactobacillus acidophilus (strain ATCC 700396 / NCK56 / N2 / NCFM).